A 244-amino-acid chain; its full sequence is Rho-related GTP-binding protein RhoE (244 aa).

Position 30–37 (30–37 (GDSQCGRT)) interacts with GTP. Residues 52–60 (YVPTVFENY) carry the Effector region motif. GTP-binding positions include 77-81 (DTSGS) and 135-138 (CKSD). Cys241 is subject to Cysteine methyl ester. Cys241 carries S-farnesyl cysteine lipidation. Residues 242–244 (TVM) constitute a propeptide, removed in mature form.

It belongs to the small GTPase superfamily. Rho family. Binds ROCK1. Interacts with UBXD5.

The protein resides in the cell membrane. Its function is as follows. Binds GTP but lacks intrinsic GTPase activity and is resistant to Rho-specific GTPase-activating proteins. The sequence is that of Rho-related GTP-binding protein RhoE (RND3) from Sus scrofa (Pig).